The primary structure comprises 183 residues: Putative manganese efflux pump MntP 1 (183 aa).

6 consecutive transmembrane segments (helical) span residues 6-26, 36-56, 64-84, 100-120, 130-150, and 158-178; these read LFLL…CIGI, IIFV…GGYI, IVPI…ILMI, IMYL…GFTT, LFMS…LGII, and ISII…LFGL.

This sequence belongs to the MntP (TC 9.B.29) family.

Its subcellular location is the cell membrane. Its function is as follows. Probably functions as a manganese efflux pump. This chain is Putative manganese efflux pump MntP 1, found in Clostridium botulinum (strain Langeland / NCTC 10281 / Type F).